Reading from the N-terminus, the 91-residue chain is Acylphosphatase (91 aa).

The Acylphosphatase-like domain maps to 4–91 (RAMVTVKGMV…GEFDDFHIAY (88 aa)). Catalysis depends on residues R19 and N37.

The protein belongs to the acylphosphatase family.

It catalyses the reaction an acyl phosphate + H2O = a carboxylate + phosphate + H(+). The protein is Acylphosphatase (acyP) of Geotalea uraniireducens (strain Rf4) (Geobacter uraniireducens).